Here is a 2864-residue protein sequence, read N- to C-terminus: Genome polyprotein (2864 aa).

Polar residues-rich tracts occupy residues 1 to 10 (MPVISTQTSP) and 21 to 32 (QTQASYPVSIKT). Residues 1 to 49 (MPVISTQTSPVPAPRTRKNKQTQASYPVSIKTSVERGQRAKRKVQRDAR) are disordered. A helical membrane pass occupies residues 133–153 (WATGWFGVHLFVVCLLSLACP). Residues N165, N212, and N264 are each glycosylated (N-linked (GlcNAc...) asparagine; by host). Residues 324–344 (LIYYASRGKWYQLLLALMLYI) traverse the membrane as a helical segment. N-linked (GlcNAc...) asparagine; by host glycans are attached at residues N380, N400, N422, N446, N467, and N512. 5 helical membrane-spanning segments follow: residues 582–602 (AVVL…AYLC), 628–648 (AGWD…FFIC), 660–680 (LLGF…AAAA), 706–726 (PRIA…LLHL), and 737–757 (IIGG…RFGF). The N-linked (GlcNAc...) asparagine; by host glycan is linked to N782. 2 consecutive transmembrane segments (helical) span residues 790-810 (FLLV…TFCV) and 847-867 (WYSH…GVFF). The 122-residue stretch at 819-940 (TSSAASFFGT…AMPPDGWAIT (122 aa)) folds into the Peptidase C18 domain. Active-site for protease NS2 activity; shared with dimeric partner residues include H870, E888, and C909. In terms of domain architecture, Peptidase S29 spans 941–1122 (APFTLQCLSE…VCAGYHPQYT (182 aa)). Active-site charge relay system; for serine protease NS3 activity residues include H997 and D1021. Zn(2+) is bound by residues C1037 and C1039. An N-linked (GlcNAc...) asparagine; by host glycan is attached at N1057. S1079 acts as the Charge relay system; for serine protease NS3 activity in catalysis. The Zn(2+) site is built by C1085 and H1089. The Helicase ATP-binding domain maps to 1131-1281 (PTVPNEYSVQ…ANITEIQLTD (151 aa)). Residue 1144–1151 (APTGSGKS) coordinates ATP. Mg(2+) is bound by residues S1151 and E1229. Residues 1228–1231 (DECH) carry the DECH box motif. N1273 carries N-linked (GlcNAc...) asparagine; by host glycosylation. The 166-residue stretch at 1284–1449 (TIPFHGKKIK…GLSSTEAQTI (166 aa)) folds into the Helicase C-terminal domain. N-linked (GlcNAc...) asparagine; by host glycosylation is present at N1559. Transmembrane regions (helical) follow at residues 1565–1585 (ALAV…FGAT), 1653–1673 (FLGP…GLVT), 1678–1698 (PFAS…PHKI), 1722–1742 (FMMA…GFVF), and 1783–1803 (AAGV…TAGP). A lipid anchor (S-palmitoyl cysteine; by host) is attached at C1863. A helical membrane pass occupies residues 1864–1884 (GLIAWGLEIWQYVCNFFVICF). Residues C1905, C1923, C1925, and C1947 each coordinate Zn(2+). 2 disordered regions span residues 2139–2178 (TGSL…SPPV) and 2209–2266 (GPDD…TKKK). The segment covering 2226–2240 (SDGSWSTTTTASSYV) has biased composition (polar residues). In terms of domain architecture, RdRp catalytic spans 2485-2603 (AVGATCDTVC…IWKSAGADAD (119 aa)). D2491, D2589, and D2590 together coordinate Mg(2+). Residues N2640 and N2722 are each glycosylated (N-linked (GlcNAc...) asparagine; by host). The helical transmembrane segment at 2844-2864 (VKYLAVIVFALGLIAVGLAIS) threads the bilayer.

Homooligomer. Interacts with E1 (via C-terminus). Interacts with the non-structural protein 5A. Part of the viral assembly initiation complex composed of NS2, E1, E2, NS3, NS4A, NS5A and the core protein. As to quaternary structure, forms a heterodimer with envelope glycoprotein E2. Interacts with the core protein. Interacts with protease NS2. Part of the viral assembly initiation complex composed of NS2, E1, E2, NS3, NS4A, NS5A and the core protein. In terms of assembly, forms a heterodimer with envelope glycoprotein E1. Part of the viral assembly initiation complex composed of NS2, E1, E2, NS3, NS4A, NS5A and the core protein. Homodimer. Interacts with envelope glycoprotein E1. Interacts with envelope glycoprotein E2. Interacts with viroporin p7. Interacts with serine protease/helicase NS3. Part of the replication complex composed of NS2, NS3, NS4A, NS4B, NS5A and the RNA-directed RNA polymerase embedded in an ER-derived membranous web. Part of the viral assembly initiation complex composed of NS2, E1, E2, NS3, NS4A, NS5A and the core protein. As to quaternary structure, interacts with protease NS2. Interacts with non-structural protein 4A; this interaction stabilizes the folding of NS3 serine protease. NS3-NS4A interaction is essential for NS3 activation and allows membrane anchorage of the latter. Interacts with host MAVS; this interaction leads to the cleavage and inhibition of host MAVS. Part of the replication complex composed of NS2, NS3, NS4A, NS4B, NS5A and the RNA-directed RNA polymerase embedded in an ER-derived membranous web. Part of the viral assembly initiation complex composed of NS2, E1, E2, NS3, NS4A, NS5A and the core protein. In terms of assembly, interacts with NS3 serine protease; this interaction stabilizes the folding of NS3 serine protease. NS3-NS4A interaction is essential for NS3 activation and allows membrane anchorage of the latter. Interacts with non-structural protein 5A (via N-terminus). Part of the replication complex composed of NS2, NS3, NS4A, NS4B, NS5A and the RNA-directed RNA polymerase embedded in an ER-derived membranous web. Part of the viral assembly initiation complex composed of NS2, E1, E2, NS3, NS4A, NS5A and the core protein. Monomer. Homodimer; dimerization is required for RNA-binding. Interacts with the core protein. Interacts (via N-terminus) with non-structural protein 4A. Interacts with non-structural protein 4B. Interacts with RNA-directed RNA polymerase. Part of the viral assembly initiation complex composed of NS2, E1, E2, NS3, NS4A, NS5A and the core protein. Part of the replication complex composed of NS2, NS3, NS4A, NS4B, NS5A and the RNA-directed RNA polymerase. The cofactor is Zn(2+). It depends on Mg(2+) as a cofactor. Mn(2+) serves as cofactor. Specific enzymatic cleavages in vivo yield mature proteins. The structural proteins, core, E1, E2 and p7 are produced by proteolytic processing by host signal peptidases. The other proteins (p7, NS2, NS3, NS4A, NS4B, NS5A and NS5B) are cleaved by the viral proteases. Autoprocessing between NS2 and NS3 is mediated by the NS2 cysteine protease catalytic domain and regulated by the NS3 N-terminal domain. P13 may be further cleaved into p6 and p7 if the internal cleavage site is used. In terms of processing, highly N-glycosylated. Post-translationally, palmitoylated. This modification may play a role in its polymerization or in protein-protein interactions.

Its subcellular location is the virion. The protein localises to the host cytoplasm. It is found in the host lipid droplet. It localises to the virion membrane. The protein resides in the host endoplasmic reticulum membrane. Its subcellular location is the host perinuclear region. The protein localises to the host mitochondrion. It is found in the host nucleus. It carries out the reaction Hydrolysis of four peptide bonds in the viral precursor polyprotein, commonly with Asp or Glu in the P6 position, Cys or Thr in P1 and Ser or Ala in P1'.. The catalysed reaction is a ribonucleoside 5'-triphosphate + H2O = a ribonucleoside 5'-diphosphate + phosphate + H(+). It catalyses the reaction ATP + H2O = ADP + phosphate + H(+). The enzyme catalyses RNA(n) + a ribonucleoside 5'-triphosphate = RNA(n+1) + diphosphate. In terms of biological role, packages viral RNA to form a viral nucleocapsid, and promotes virion budding. Participates in the viral particle production as a result of its interaction with the non-structural protein 5A. Binds RNA and may function as a RNA chaperone to induce the RNA structural rearrangements taking place during virus replication. Modulates viral translation initiation by interacting with viral IRES and 40S ribosomal subunit. Probably affects various cell signaling pathways, host immunity and lipid metabolism. Forms a heterodimer with envelope glycoprotein E2, which mediates virus attachment to the host cell, virion internalization through clathrin-dependent endocytosis and fusion with host membrane. Fusion with the host cell is most likely mediated by both E1 and E2, through conformational rearrangements of the heterodimer required for fusion rather than a classical class II fusion mechanism. Functionally, forms a heterodimer with envelope glycoprotein E1, which mediates virus attachment to the host cell, virion internalization through clathrin-dependent endocytosis and fusion with host membrane. Fusion with the host cell is most likely mediated by both E1 and E2, through conformational rearrangements of the heterodimer required for fusion rather than a classical class II fusion mechanism. Its function is as follows. May function as a multimeric ion channel protein (viroporin). In terms of biological role, cysteine protease required for the proteolytic auto-cleavage between the non-structural proteins NS2 and NS3. The N-terminus of NS3 is required for the function of NS2 protease (active region NS2-3). Promotes the initiation of viral particle assembly by mediating the interaction between structural and non-structural proteins. Displays three enzymatic activities: serine protease with a chymotrypsin-like fold, NTPase and RNA helicase. NS3 serine protease, in association with NS4A, is responsible for the cleavages of NS3-NS4A, NS4A-NS4B, NS4B-NS5A and NS5A-NS5B. The NS3/NS4A complex prevents phosphorylation of host IRF3, thus preventing the establishment of dsRNA induced antiviral state. NS3 RNA helicase binds to RNA and unwinds both dsDNA and dsRNA in the 3' to 5' direction, and likely resolves RNA complicated stable secondary structures in the template strand. Cleaves host MAVS/CARDIF thereby preventing the establishment of an antiviral state. Functionally, induces a specific membrane alteration that serves as a scaffold for the virus replication complex. This membrane alteration gives rise to the so-called ER-derived membranous web that contains the replication complex. NS4B self-interaction contributes to its function in membranous web formation. Its function is as follows. Phosphorylated protein that is indispensable for viral replication and assembly. In terms of biological role, RNA-dependent RNA polymerase that performs primer-template recognition and RNA synthesis during viral replication. Initiates RNA transcription/replication at a flavin adenine dinucleotide (FAD), resulting in a 5'- FAD cap on viral RNAs. In this way, recognition of viral 5' RNA by host pattern recognition receptors can be bypassed, thereby evading activation of antiviral pathways. This is Genome polyprotein from Hepatitis GB virus B (GBV-B).